Consider the following 497-residue polypeptide: Lysine--tRNA ligase (497 aa).

The Mg(2+) site is built by Glu-406 and Glu-413.

The protein belongs to the class-II aminoacyl-tRNA synthetase family. As to quaternary structure, homodimer. Mg(2+) serves as cofactor.

The protein localises to the cytoplasm. It carries out the reaction tRNA(Lys) + L-lysine + ATP = L-lysyl-tRNA(Lys) + AMP + diphosphate. The sequence is that of Lysine--tRNA ligase from Rhizobium leguminosarum bv. trifolii (strain WSM2304).